Consider the following 297-residue polypeptide: D-alanine--D-alanine ligase (297 aa).

One can recognise an ATP-grasp domain in the interval 95–294 (KMLWKAFGLP…FEQLVVKILE (200 aa)). Residue 125–180 (VAKLGLPLMVKPSLEGSSVGLTKVKAVEELKSAVEYALKFDNTILIEEWLAGDELT) participates in ATP binding. Mg(2+) contacts are provided by D248, E261, and N263.

It belongs to the D-alanine--D-alanine ligase family. Mg(2+) is required as a cofactor. The cofactor is Mn(2+).

It is found in the cytoplasm. The enzyme catalyses 2 D-alanine + ATP = D-alanyl-D-alanine + ADP + phosphate + H(+). Its pathway is cell wall biogenesis; peptidoglycan biosynthesis. Functionally, cell wall formation. The protein is D-alanine--D-alanine ligase of Haemophilus influenzae (strain PittEE).